The following is a 358-amino-acid chain: Very long chain fatty acid elongase AAEL008004 (358 aa).

The next 7 helical transmembrane spans lie at 26-46 (WPLMSSPFPTLALCLGYVYLV), 66-86 (LILYNFVQVVFSAWLFYEIGI), 115-135 (ACWWYYFSKFTEFFDTFFFVM), 147-167 (VIHHGCMPMSVWFGVKFTPGG), 171-191 (FFGLLNTFVHIVMYTYYLFTA), 207-227 (TSLQMVQFVAIMVHAFQLLFI), and 234-254 (AFVWWIGMHAVMFLFLFNEFY). The span at 285 to 295 (SAVSSNGSAIT) shows a compositional bias: polar residues. Positions 285 to 322 (SAVSSNGSAITANGHHGKNGSVHHHSNGSATSNGTSLL) are disordered. Positions 299-310 (HHGKNGSVHHHS) are enriched in basic residues. A compositionally biased stretch (polar residues) spans 311 to 322 (NGSATSNGTSLL).

The protein belongs to the ELO family.

It is found in the membrane. It carries out the reaction a very-long-chain acyl-CoA + malonyl-CoA + H(+) = a very-long-chain 3-oxoacyl-CoA + CO2 + CoA. Its function is as follows. Could be implicated in synthesis of very long chain fatty acids. The protein is Very long chain fatty acid elongase AAEL008004 of Aedes aegypti (Yellowfever mosquito).